The chain runs to 110 residues: Large ribosomal subunit protein uL22 (110 aa).

Belongs to the universal ribosomal protein uL22 family. Part of the 50S ribosomal subunit.

Its function is as follows. This protein binds specifically to 23S rRNA; its binding is stimulated by other ribosomal proteins, e.g. L4, L17, and L20. It is important during the early stages of 50S assembly. It makes multiple contacts with different domains of the 23S rRNA in the assembled 50S subunit and ribosome. In terms of biological role, the globular domain of the protein is located near the polypeptide exit tunnel on the outside of the subunit, while an extended beta-hairpin is found that lines the wall of the exit tunnel in the center of the 70S ribosome. In Klebsiella pneumoniae (strain 342), this protein is Large ribosomal subunit protein uL22.